Here is a 596-residue protein sequence, read N- to C-terminus: Pentatricopeptide repeat-containing protein At1g50270 (596 aa).

PPR repeat units lie at residues 66–102 (SIQL…GVIP), 103–136 (SRHT…GLDS), 137–167 (DPFV…AEDK), 168–202 (DVVT…GVAA), 203–237 (NEMT…GRVK), 239–269 (DVFI…MPSR), 270–304 (NVVT…DVAP), 305–339 (NEKT…SIEI), 340–370 (NTTA…LHEK), 371–405 (NVYT…HVSP), 406–436 (NEVT…MKGR), and 442–472 (KADH…MPME). Positions 477–552 (VWGALFGSCL…SPGFSWIEVK (76 aa)) are type E motif. Positions 553–584 (GKLCEFIAFDDKKPLESDDLYKTLDTVGVQMR) are type E(+) motif.

This sequence belongs to the PPR family. PCMP-E subfamily.

The sequence is that of Pentatricopeptide repeat-containing protein At1g50270 (PCMP-E42) from Arabidopsis thaliana (Mouse-ear cress).